A 160-amino-acid chain; its full sequence is Putative UPF0479 protein YNL339W-B (160 aa).

Transmembrane regions (helical) follow at residues 39–59 (IVFC…KVLQ) and 136–156 (VPMI…ISQH).

It belongs to the UPF0479 family.

The protein resides in the membrane. The polypeptide is Putative UPF0479 protein YNL339W-B (Saccharomyces cerevisiae (strain ATCC 204508 / S288c) (Baker's yeast)).